The following is a 347-amino-acid chain: MTVSEIHIPNSLLDRDCTTLSRHVLQQLNSFGADAQDLSAIMNRIALAGKLIARRLSRAGLMADVLGFTGETNVQGESVKKMDVFANDVFISVFKQSGLVCRLASEEMEKPYYIPENCPIGRYTLLYDPIDGSSNVDINLNVGSIFAIRQQEGDDLDGSASDLLANGDKQIAAGYILYGPSTILVYSLGSGVHSFILDPSLGEFILAQENIRIPNHGPIYSTNEGNFWQWDEALRDYTRYVHRHEGYTARYSGALVGDIHRILMQGGVFLYPGTEKNPDGKLRLLYETAPLAFLVEQAGGRASDGQKRLLDLIPSKLHQRTPAIIGSAEDVKLVESFISDHKQRQGN.

Residues Glu106, Asp128, Ile130, and Asp131 each contribute to the Mg(2+) site. Residues 131 to 134 (DGSS), Asn223, Tyr251, and Lys281 each bind substrate. Residue Glu287 participates in Mg(2+) binding.

It belongs to the FBPase class 1 family. Homotetramer. Mg(2+) serves as cofactor.

It is found in the cytoplasm. The enzyme catalyses beta-D-fructose 1,6-bisphosphate + H2O = beta-D-fructose 6-phosphate + phosphate. Its pathway is carbohydrate biosynthesis; Calvin cycle. In Synechocystis sp. (strain ATCC 27184 / PCC 6803 / Kazusa), this protein is Fructose-1,6-bisphosphatase class 1.